The primary structure comprises 587 residues: Hatching enzyme (587 aa).

Positions 1 to 18 (MANSGLILLVMFMIHVTT) are cleaved as a signal peptide. Residues 19-166 (VHNVPLPSTA…PRCGVPDVLP (148 aa)) constitute a propeptide, activation peptide. N-linked (GlcNAc...) asparagine glycans are attached at residues Asn64, Asn126, and Asn141. The short motif at 157-164 (PRCGVPDV) is the Cysteine switch element. The Zn(2+) site is built by Cys159 and His283. Glu284 is a catalytic residue. His287 and His293 together coordinate Zn(2+). Residues 325–382 (LYGSNSGSGTTTTTRRPTTTRATTTRRTTTTRATTTRATTTTTTSPSRPSPPRRACSG) form a disordered region. Residues 334 to 371 (TTTTTRRPTTTRATTTRRTTTTRATTTRATTTTTTSPS) are compositionally biased toward low complexity. Cys380 and Cys582 form a disulfide bridge. Hemopexin repeat units lie at residues 381-422 (SGSF…RFGF), 425-468 (PQNI…WVGL), 469-513 (PCNI…FNDV), and 518-570 (HDGV…IPQC). N-linked (GlcNAc...) asparagine glycosylation is present at Asn584.

It belongs to the peptidase M10A family. Requires Zn(2+) as cofactor.

The enzyme catalyses Hydrolysis of proteins of the fertilization envelope and dimethylcasein.. In terms of biological role, allows the sea urchin to digest the protective envelope derived from the egg extracellular matrix; thus allowing the sea urchin to swim freely. The chain is Hatching enzyme from Paracentrotus lividus (Common sea urchin).